Reading from the N-terminus, the 207-residue chain is Ras-related protein Rab-8B (207 aa).

GTP contacts are provided by Ser-17, Gly-18, Val-19, Gly-20, Lys-21, Thr-22, Cys-23, Thr-35, Ser-39, and Thr-40. Thr-22 contacts Mg(2+). 2 consecutive short sequence motifs (switch) follow at residues 31–45 (DAFN…GIDF) and 63–80 (DTAG…YYRG). Residues Thr-40 and Asp-63 each coordinate Mg(2+). Gly-66 serves as a coordination point for GTP. Thr-72 carries the phosphothreonine modification. GTP-binding residues include Asn-121, Lys-122, Asp-124, Ala-152, and Lys-153. Residue Ser-180 is modified to Phosphoserine. Cysteine methyl ester is present on Cys-204. Residue Cys-204 is the site of S-geranylgeranyl cysteine attachment. The propeptide at 205–207 (LLL) is removed in mature form.

This sequence belongs to the small GTPase superfamily. Rab family. As to quaternary structure, associated with actin, delta-catenin and alpha and beta tubulins. Interacts with OTOF. Interacts with PEX5R. Interacts with RAB3IP. Interacts with VIM. Interacts with CDH1. Interacts with MICALL2. Interacts with GDI1, GDI2, CHML and CHM; phosphorylation at Thr-72 disrupts these interactions. Interacts with MICAL1. It depends on Mg(2+) as a cofactor. Post-translationally, phosphorylation of Thr-72 in the switch II region by LRRK2 prevents the association of RAB regulatory proteins, including CHM, CHML and RAB GDP dissociation inhibitors GDI1 and GDI2.

The protein localises to the cell membrane. It is found in the cytoplasmic vesicle. Its subcellular location is the phagosome membrane. It localises to the endosome membrane. The catalysed reaction is GTP + H2O = GDP + phosphate + H(+). Regulated by guanine nucleotide exchange factors (GEFs) including RAB3IP/RABIN8 which promotes the exchange of bound GDP for free GTP. Regulated by GTPase activating proteins (GAPs) which increase the GTP hydrolysis activity. Inhibited by GDP dissociation inhibitors (GDIs). In terms of biological role, the small GTPases Rab are key regulators of intracellular membrane trafficking, from the formation of transport vesicles to their fusion with membranes. Rabs cycle between an inactive GDP-bound form and an active GTP-bound form that is able to recruit to membranes different sets of downstream effectors directly responsible for vesicle formation, movement, tethering and fusion. RAB8B may be involved in polarized vesicular trafficking and neurotransmitter release. May participate in cell junction dynamics in Sertoli cells. May also participate in the export of a subset of neosynthesized proteins through a Rab8-Rab10-Rab11-dependent endososomal export route. The polypeptide is Ras-related protein Rab-8B (RAB8B) (Pongo abelii (Sumatran orangutan)).